Reading from the N-terminus, the 130-residue chain is EG45-like domain containing protein 2 (130 aa).

The N-terminal stretch at 1-25 is a signal peptide; that stretch reads MIKMAVKFVVVMIVFAQILAPIAEA. The Expansin-like EG45 domain occupies 28-130; the sequence is GKAVYYDPPY…GNIRVVYTPI (103 aa). Asn106 carries N-linked (GlcNAc...) asparagine glycosylation.

Expressed in unstressed leaves.

Its subcellular location is the secreted. Functionally, plays a systemic role in water and solute homeostasis. The sequence is that of EG45-like domain containing protein 2 (EGC2) from Arabidopsis thaliana (Mouse-ear cress).